The chain runs to 450 residues: Tubulin beta-2 chain (450 aa).

GTP contacts are provided by Gln11, Glu69, Ser138, Gly142, Thr143, Gly144, Asn204, and Asn226. Glu69 is a Mg(2+) binding site. The interval 428-450 (ATAEDDVDGYAEGEAGETYESEQ) is disordered. Positions 429 to 450 (TAEDDVDGYAEGEAGETYESEQ) are enriched in acidic residues.

It belongs to the tubulin family. In terms of assembly, dimer of alpha and beta chains. A typical microtubule is a hollow water-filled tube with an outer diameter of 25 nm and an inner diameter of 15 nm. Alpha-beta heterodimers associate head-to-tail to form protofilaments running lengthwise along the microtubule wall with the beta-tubulin subunit facing the microtubule plus end conferring a structural polarity. Microtubules usually have 13 protofilaments but different protofilament numbers can be found in some organisms and specialized cells. It depends on Mg(2+) as a cofactor. In terms of processing, cleaved by caspase ced-3 in vitro.

The protein localises to the cytoplasm. The protein resides in the cytoskeleton. Its function is as follows. Tubulin is the major constituent of microtubules, a cylinder consisting of laterally associated linear protofilaments composed of alpha- and beta-tubulin heterodimers. Microtubules grow by the addition of GTP-tubulin dimers to the microtubule end, where a stabilizing cap forms. Below the cap, tubulin dimers are in GDP-bound state, owing to GTPase activity of alpha-tubulin. Required for the normal dynamic behavior of the non-centrosomal microtubules in the epidermal syncytium. Involved in the redistribution of microtubule end-binding protein EB1/ebp-2 caused by wounding. Required to modulate expression in the epidermis of antimicrobial peptides, such as nlp-29, after wounding, or fungal infection. In Caenorhabditis elegans, this protein is Tubulin beta-2 chain (tbb-2).